The chain runs to 535 residues: Succinate-semialdehyde dehydrogenase, mitochondrial (535 aa).

Residues 1 to 47 constitute a mitochondrion transit peptide; the sequence is MATCIWLRSCGARRLGSTFPGCRLRPRAGGLVPASGPAPGPAQLRCY. At K126 the chain carries N6-acetyllysine; alternate. The residue at position 126 (K126) is an N6-succinyllysine; alternate. Residues K135 and K184 each carry the N6-succinyllysine modification. NAD(+)-binding positions include R213 and 228 to 231; that span reads KPAE. A substrate-binding site is contributed by R213. K265 bears the N6-acetyllysine; alternate mark. K265 is modified (N6-succinyllysine; alternate). 284 to 289 serves as a coordination point for NAD(+); the sequence is GSTTTG. E306 serves as the catalytic Proton acceptor. R334 lines the substrate pocket. The active-site Nucleophile is the C340. A disulfide bridge links C340 with C342. Residue K365 is modified to N6-acetyllysine. At K402 the chain carries N6-succinyllysine. An N6-acetyllysine modification is found at K411. S498 is a substrate binding site. S499 bears the Phosphoserine mark.

It belongs to the aldehyde dehydrogenase family. In terms of assembly, homotetramer.

It is found in the mitochondrion. It catalyses the reaction succinate semialdehyde + NAD(+) + H2O = succinate + NADH + 2 H(+). The protein operates within amino-acid degradation; 4-aminobutanoate degradation. With respect to regulation, redox-regulated. Inhibited under oxydizing conditions. In terms of biological role, catalyzes one step in the degradation of the inhibitory neurotransmitter gamma-aminobutyric acid (GABA). This chain is Succinate-semialdehyde dehydrogenase, mitochondrial (ALDH5A1), found in Pan troglodytes (Chimpanzee).